Here is a 172-residue protein sequence, read N- to C-terminus: Signal peptidase complex catalytic subunit sec11 (172 aa).

The Cytoplasmic portion of the chain corresponds to 1–14 (MLSGLANPRQAAVQ). The helical; Signal-anchor for type II membrane protein transmembrane segment at 15 to 35 (LMNFGLILSTAFMMWKGISVI) threads the bilayer. Residues 36–172 (TDSPSPIVVV…MGLVVVLQRE (137 aa)) are Lumenal-facing. Catalysis depends on charge relay system residues serine 49 and histidine 90. N-linked (GlcNAc...) asparagine glycosylation is present at asparagine 111. Aspartate 115 acts as the Charge relay system in catalysis. The C-terminal short (CTS) helix stretch occupies residues 158-169 (VMLGLMGLVVVL).

The protein belongs to the peptidase S26B family. Component of the signal peptidase complex (SPC) composed of a catalytic subunit SEC11 and three accessory subunits SPC1, SPC2 and SPC3. The complex induces a local thinning of the ER membrane which is used to measure the length of the signal peptide (SP) h-region of protein substrates. This ensures the selectivity of the complex towards h-regions shorter than 18-20 amino acids. SPC associates with the translocon complex.

The protein resides in the endoplasmic reticulum membrane. The enzyme catalyses Cleavage of hydrophobic, N-terminal signal or leader sequences from secreted and periplasmic proteins.. Its function is as follows. Catalytic component of the signal peptidase complex (SPC) which catalyzes the cleavage of N-terminal signal sequences from nascent proteins as they are translocated into the lumen of the endoplasmic reticulum. Specifically cleaves N-terminal signal peptides that contain a hydrophobic alpha-helix (h-region) shorter than 18-20 amino acids. This is Signal peptidase complex catalytic subunit sec11 (sec11) from Neurospora crassa (strain ATCC 24698 / 74-OR23-1A / CBS 708.71 / DSM 1257 / FGSC 987).